Consider the following 279-residue polypeptide: MTKADQIFKANIQKIINEGSLSEQARPKYKDGRTAHSKYITGAFAEYDLAKGEFPITTLRPIPIKSAIKELFWIYQDQSNSLDVLEAKYNVHYWNEWEVDQTRTIGQRYGAVVKKHDIISKILKQLAENPWNRRNVISLWDYEAFEETKGLLPCAFQIMFDVRRVGEDLYLDASLTQRSNDILVAHHINAMQYVALQMMIAKHFGWKIGKFFYFVNNLHIYDNQFDQAQELLKRQPVASQPKLVLNVPDGTNFFDIKPDDFELQNYDPVKPQLHFDLAI.

133–134 (RR) lines the dUMP pocket. Cysteine 154 (nucleophile) is an active-site residue. Residues 178-181 (RSND), asparagine 189, and 219-221 (HIY) contribute to the dUMP site. Aspartate 181 is a binding site for (6R)-5,10-methylene-5,6,7,8-tetrahydrofolate. Residue alanine 278 coordinates (6R)-5,10-methylene-5,6,7,8-tetrahydrofolate.

This sequence belongs to the thymidylate synthase family. Bacterial-type ThyA subfamily. In terms of assembly, homodimer.

It is found in the cytoplasm. It carries out the reaction dUMP + (6R)-5,10-methylene-5,6,7,8-tetrahydrofolate = 7,8-dihydrofolate + dTMP. Its pathway is pyrimidine metabolism; dTTP biosynthesis. Catalyzes the reductive methylation of 2'-deoxyuridine-5'-monophosphate (dUMP) to 2'-deoxythymidine-5'-monophosphate (dTMP) while utilizing 5,10-methylenetetrahydrofolate (mTHF) as the methyl donor and reductant in the reaction, yielding dihydrofolate (DHF) as a by-product. This enzymatic reaction provides an intracellular de novo source of dTMP, an essential precursor for DNA biosynthesis. This Streptococcus pyogenes serotype M6 (strain ATCC BAA-946 / MGAS10394) protein is Thymidylate synthase.